We begin with the raw amino-acid sequence, 334 residues long: Phenylalanine--tRNA ligase alpha subunit (334 aa).

Glu-249 is a binding site for Mg(2+).

The protein belongs to the class-II aminoacyl-tRNA synthetase family. Phe-tRNA synthetase alpha subunit type 1 subfamily. As to quaternary structure, tetramer of two alpha and two beta subunits. The cofactor is Mg(2+).

It is found in the cytoplasm. The enzyme catalyses tRNA(Phe) + L-phenylalanine + ATP = L-phenylalanyl-tRNA(Phe) + AMP + diphosphate + H(+). In Desulfatibacillum aliphaticivorans, this protein is Phenylalanine--tRNA ligase alpha subunit.